The primary structure comprises 362 residues: Peptide chain release factor 1 (362 aa).

Glutamine 237 is modified (N5-methylglutamine).

The protein belongs to the prokaryotic/mitochondrial release factor family. Methylated by PrmC. Methylation increases the termination efficiency of RF1.

The protein resides in the cytoplasm. Functionally, peptide chain release factor 1 directs the termination of translation in response to the peptide chain termination codons UAG and UAA. The protein is Peptide chain release factor 1 of Vibrio parahaemolyticus serotype O3:K6 (strain RIMD 2210633).